Reading from the N-terminus, the 515-residue chain is Glucose-6-phosphate 1-dehydrogenase (515 aa).

A2 carries the N-acetylalanine modification. S8 carries the phosphoserine modification. Phosphothreonine is present on T10. Residues 38–45 (GASGDLAK) and R72 contribute to the NADP(+) site. K89 bears the N6-acetyllysine mark. Positions 147 and 171 each coordinate NADP(+). Residues K171, 201-205 (HYLGK), E239, and D258 contribute to the D-glucose 6-phosphate site. K171 is modified (N6-(2-hydroxyisobutyryl)lysine; alternate). An N6-acetyllysine; alternate modification is found at K171. H263 acts as the Proton acceptor in catalysis. Residue R357 participates in NADP(+) binding. Residues K360 and R365 each contribute to the D-glucose 6-phosphate site. NADP(+) contacts are provided by K366, R370, and R393. D-glucose 6-phosphate is bound at residue Q395. NADP(+) is bound by residues 401-403 (YTK) and 421-423 (DLT). At K403 the chain carries N6-acetyllysine. K432 is modified (N6-acetyllysine). Residue R487 participates in NADP(+) binding. K497 is subject to N6-acetyllysine. NADP(+) is bound by residues Y503 and W509. Y503 bears the Phosphotyrosine mark.

The protein belongs to the glucose-6-phosphate dehydrogenase family. In terms of assembly, homotetramer; dimer of dimers. Interacts with SIRT2; the interaction is enhanced by H(2)O(2) treatment. Forms a ternary complex with ALDOB and TP53; this interaction is direct. ALDOB stabilizes the complex inhibiting G6PD activity and keeping oxidative pentose phosphate metabolism in check. Acetylated by ELP3 at Lys-403; acetylation inhibits its homodimerization and enzyme activity. Deacetylated by SIRT2 at Lys-403; deacetylation stimulates its enzyme activity.

The protein resides in the cytoplasm. Its subcellular location is the cytosol. The protein localises to the membrane. It catalyses the reaction D-glucose 6-phosphate + NADP(+) = 6-phospho-D-glucono-1,5-lactone + NADPH + H(+). The protein operates within carbohydrate degradation; pentose phosphate pathway; D-ribulose 5-phosphate from D-glucose 6-phosphate (oxidative stage): step 1/3. Its function is as follows. Cytosolic glucose-6-phosphate dehydrogenase that catalyzes the first and rate-limiting step of the oxidative branch within the pentose phosphate pathway/shunt, an alternative route to glycolysis for the dissimilation of carbohydrates and a major source of reducing power and metabolic intermediates for fatty acid and nucleic acid biosynthetic processes. The chain is Glucose-6-phosphate 1-dehydrogenase (G6PD) from Osphranter robustus (Wallaroo).